Here is a 136-residue protein sequence, read N- to C-terminus: Protein NrdI (136 aa).

Belongs to the NrdI family.

Probably involved in ribonucleotide reductase function. The protein is Protein NrdI of Klebsiella pneumoniae subsp. pneumoniae (strain ATCC 700721 / MGH 78578).